Reading from the N-terminus, the 361-residue chain is Phosphoserine aminotransferase (361 aa).

Arg-43 is an L-glutamate binding site. Pyridoxal 5'-phosphate is bound by residues 77 to 78 (AS), Trp-103, Thr-153, Asp-173, and Gln-196. Position 197 is an N6-(pyridoxal phosphate)lysine (Lys-197). 238–239 (NT) serves as a coordination point for pyridoxal 5'-phosphate.

Belongs to the class-V pyridoxal-phosphate-dependent aminotransferase family. SerC subfamily. As to quaternary structure, homodimer. Pyridoxal 5'-phosphate is required as a cofactor.

The protein resides in the cytoplasm. It carries out the reaction O-phospho-L-serine + 2-oxoglutarate = 3-phosphooxypyruvate + L-glutamate. The catalysed reaction is 4-(phosphooxy)-L-threonine + 2-oxoglutarate = (R)-3-hydroxy-2-oxo-4-phosphooxybutanoate + L-glutamate. It functions in the pathway amino-acid biosynthesis; L-serine biosynthesis; L-serine from 3-phospho-D-glycerate: step 2/3. The protein operates within cofactor biosynthesis; pyridoxine 5'-phosphate biosynthesis; pyridoxine 5'-phosphate from D-erythrose 4-phosphate: step 3/5. Functionally, catalyzes the reversible conversion of 3-phosphohydroxypyruvate to phosphoserine and of 3-hydroxy-2-oxo-4-phosphonooxybutanoate to phosphohydroxythreonine. This Azotobacter vinelandii (strain DJ / ATCC BAA-1303) protein is Phosphoserine aminotransferase.